We begin with the raw amino-acid sequence, 430 residues long: Methylenetetrahydrofolate--tRNA-(uracil-5-)-methyltransferase TrmFO (430 aa).

9–14 (GAGLAG) provides a ligand contact to FAD.

This sequence belongs to the MnmG family. TrmFO subfamily. FAD serves as cofactor.

It localises to the cytoplasm. It catalyses the reaction uridine(54) in tRNA + (6R)-5,10-methylene-5,6,7,8-tetrahydrofolate + NADH + H(+) = 5-methyluridine(54) in tRNA + (6S)-5,6,7,8-tetrahydrofolate + NAD(+). The catalysed reaction is uridine(54) in tRNA + (6R)-5,10-methylene-5,6,7,8-tetrahydrofolate + NADPH + H(+) = 5-methyluridine(54) in tRNA + (6S)-5,6,7,8-tetrahydrofolate + NADP(+). Catalyzes the folate-dependent formation of 5-methyl-uridine at position 54 (M-5-U54) in all tRNAs. In Fervidobacterium nodosum (strain ATCC 35602 / DSM 5306 / Rt17-B1), this protein is Methylenetetrahydrofolate--tRNA-(uracil-5-)-methyltransferase TrmFO.